We begin with the raw amino-acid sequence, 310 residues long: Adenylyl-sulfate kinase 4, chloroplastic (310 aa).

A chloroplast-targeting transit peptide spans 1 to 75 (MDVAAMARCV…MAKDESISSR (75 aa)). Residue 116-124 (GLSGSGKSS) participates in ATP binding. Substrate-binding positions include Asp-146, Arg-149, Arg-163, Asn-166, 189-190 (IS), and Gly-239. Ser-190 serves as the catalytic Phosphoserine intermediate.

The protein belongs to the APS kinase family. Homodimer; disulfide-linked. Expressed in root vasculature, root tips, leaf epidermal and guard cells, pollen grains and radicle of immature seeds.

It localises to the plastid. The protein localises to the chloroplast. The enzyme catalyses adenosine 5'-phosphosulfate + ATP = 3'-phosphoadenylyl sulfate + ADP + H(+). Its pathway is sulfur metabolism; hydrogen sulfide biosynthesis; sulfite from sulfate: step 2/3. Catalyzes the phosphorylation of adenosine 5'-phosphosulfate to 3'-phosphoadenylyl sulfate, which is the activated sulfate form for sulfation reactions. Essential for plant reproduction and viability. This is Adenylyl-sulfate kinase 4, chloroplastic (APK4) from Arabidopsis thaliana (Mouse-ear cress).